The chain runs to 299 residues: Transcription termination/antitermination protein NusG (299 aa).

Residues 30–96 (DPDEAELADA…APVEPAEPVD (67 aa)) are disordered. 2 tandem repeats follow at residues 46-49 (EEAA) and 70-73 (EEAA). The interval 46 to 87 (EEAALHVESDEDEDEADVEVDAAVEEAADDAEVAEEEAEEAA) is 4 X 4 AA repeats of E-E-A-A. Over residues 54–87 (SDEDEDEADVEVDAAVEEAADDAEVAEEEAEEAA) the composition is skewed to acidic residues. A 3; approximate repeat occupies 80–83 (EEEA). Repeat 4 spans residues 84-87 (EEAA). A KOW domain is found at 248–276 (VGDSVTVTDGPFATLQATINEINPDSKKV).

It belongs to the NusG family. The N-terminus is blocked.

Its function is as follows. Participates in transcription elongation, termination and antitermination. The sequence is that of Transcription termination/antitermination protein NusG from Streptomyces virginiae (Streptomyces cinnamonensis).